The sequence spans 239 residues: DUP240 protein DFP3 (239 aa).

Residues 1 to 54 (MQPHLDNNSNNDDVKLDTLGEQNVLSSAENITLPEDTFKSYMTYLLYEMAHYKP) are Cytoplasmic-facing. A helical transmembrane segment spans residues 55 to 75 (MIFSFLALSVSILIVVIFHNV). The Extracellular portion of the chain corresponds to 76 to 79 (KACD). The chain crosses the membrane as a helical span at residues 80-104 (VVFGFSIFVTSILFLSTLIPFNVYI). Residues 105–239 (SDEGFRIKLL…RKQYPDADIP (135 aa)) are Cytoplasmic-facing.

This sequence belongs to the DUP/COS family. Interacts according to large scale protein interaction studies with MEC3 and ULP1.

The protein localises to the membrane. The polypeptide is DUP240 protein DFP3 (Saccharomyces cerevisiae (strain ATCC 204508 / S288c) (Baker's yeast)).